Here is a 362-residue protein sequence, read N- to C-terminus: Heme A synthase (362 aa).

Helical transmembrane passes span 11 to 31 (AAIRIWLSIVAGLIALMVLVG), 102 to 122 (VIGMVYLLPFLWFLWRGAVSG), 128 to 148 (LWLIFGLGALQGAVGWWMVAS), 159 to 179 (VRLATHLSLALLIFASIVWTL), and 198 to 218 (AWALVGVTFVQLYLGALVAGL). His262 is a heme binding site. 3 consecutive transmembrane segments (helical) span residues 264-286 (MTAYTLLALAAWHAFDVMRAGAG), 297-317 (LAAILVQAVLGIATLLMVVPI), and 318-338 (SLALLHQGTALIVLTFAVLQA). Position 323 (His323) interacts with heme.

The protein belongs to the COX15/CtaA family. Type 2 subfamily. In terms of assembly, interacts with CtaB. The cofactor is heme b.

The protein localises to the cell membrane. It catalyses the reaction Fe(II)-heme o + 2 A + H2O = Fe(II)-heme a + 2 AH2. The protein operates within porphyrin-containing compound metabolism; heme A biosynthesis; heme A from heme O: step 1/1. In terms of biological role, catalyzes the conversion of heme O to heme A by two successive hydroxylations of the methyl group at C8. The first hydroxylation forms heme I, the second hydroxylation results in an unstable dihydroxymethyl group, which spontaneously dehydrates, resulting in the formyl group of heme A. The protein is Heme A synthase of Bradyrhizobium sp. (strain ORS 278).